Consider the following 157-residue polypeptide: uncharacterized protein (157 aa).

The region spanning 6–157 is the HTH marR-type domain; that stretch reads HDELFQAIQQ…AFFNLWIKYM (152 aa). Positions 66 to 89 form a DNA-binding region, H-T-H motif; the sequence is NSFLASRLHISKAAVSKAVHALLK.

The protein resides in the cytoplasm. This is an uncharacterized protein from Bacillus subtilis (strain 168).